The chain runs to 298 residues: GTPase Era (298 aa).

Residues 3–170 form the Era-type G domain; sequence KSGFVAILGR…IKLLTDNLEE (168 aa). The interval 11–18 is G1; the sequence is GRPNVGKS. 11–18 serves as a coordination point for GTP; the sequence is GRPNVGKS. Residues 37 to 41 form a G2 region; that stretch reads QTTRN. Positions 58-61 are G3; it reads DTPG. Residues 58–62 and 120–123 contribute to the GTP site; these read DTPGI and NKID. The interval 120–123 is G4; sequence NKID. Positions 149 to 151 are G5; sequence ISA. Residues 201–279 form the KH type-2 domain; sequence TQQEVPHSVA…YLETWVKVKK (79 aa).

Belongs to the TRAFAC class TrmE-Era-EngA-EngB-Septin-like GTPase superfamily. Era GTPase family. As to quaternary structure, monomer.

Its subcellular location is the cytoplasm. It localises to the cell membrane. In terms of biological role, an essential GTPase that binds both GDP and GTP, with rapid nucleotide exchange. Plays a role in 16S rRNA processing and 30S ribosomal subunit biogenesis and possibly also in cell cycle regulation and energy metabolism. The protein is GTPase Era of Streptococcus pyogenes serotype M2 (strain MGAS10270).